The following is a 220-amino-acid chain: Response regulator protein TmoT (220 aa).

In terms of domain architecture, Response regulatory spans 21 to 135; sequence VIYIVDDDNA…DLLGAIRTAL (115 aa). Asp70 bears the 4-aspartylphosphate mark. In terms of domain architecture, HTH luxR-type spans 151-216; sequence LKASYESLSK…DLVRVTERLK (66 aa). The segment at residues 175–194 is a DNA-binding region (H-T-H motif); that stretch reads NKQTALELDISEATVKVHRH.

In terms of processing, phosphorylated by TmoS.

It is found in the cytoplasm. Functionally, member of the two-component regulatory system TmoS/TmoT involved in the regulation of toluene degradation. Induces expression of tmoX operon. This is Response regulator protein TmoT (tmoT) from Ectopseudomonas mendocina (Pseudomonas mendocina).